Consider the following 244-residue polypeptide: Biosynthetic peptidoglycan transglycosylase (244 aa).

A helical membrane pass occupies residues 26–46 (FLSYFIGLTVALTFLFRFVPI).

It belongs to the glycosyltransferase 51 family.

The protein localises to the cell inner membrane. The catalysed reaction is [GlcNAc-(1-&gt;4)-Mur2Ac(oyl-L-Ala-gamma-D-Glu-L-Lys-D-Ala-D-Ala)](n)-di-trans,octa-cis-undecaprenyl diphosphate + beta-D-GlcNAc-(1-&gt;4)-Mur2Ac(oyl-L-Ala-gamma-D-Glu-L-Lys-D-Ala-D-Ala)-di-trans,octa-cis-undecaprenyl diphosphate = [GlcNAc-(1-&gt;4)-Mur2Ac(oyl-L-Ala-gamma-D-Glu-L-Lys-D-Ala-D-Ala)](n+1)-di-trans,octa-cis-undecaprenyl diphosphate + di-trans,octa-cis-undecaprenyl diphosphate + H(+). It functions in the pathway cell wall biogenesis; peptidoglycan biosynthesis. In terms of biological role, peptidoglycan polymerase that catalyzes glycan chain elongation from lipid-linked precursors. This Mannheimia succiniciproducens (strain KCTC 0769BP / MBEL55E) protein is Biosynthetic peptidoglycan transglycosylase.